The chain runs to 125 residues: Glycine cleavage system H protein (125 aa).

One can recognise a Lipoyl-binding domain in the interval 19–101; the sequence is IATIGITDYA…MGDGWFIKLR (83 aa). Lysine 60 carries the N6-lipoyllysine modification.

This sequence belongs to the GcvH family. In terms of assembly, the glycine cleavage system is composed of four proteins: P, T, L and H. The cofactor is (R)-lipoate.

Functionally, the glycine cleavage system catalyzes the degradation of glycine. The H protein shuttles the methylamine group of glycine from the P protein to the T protein. The sequence is that of Glycine cleavage system H protein from Parvibaculum lavamentivorans (strain DS-1 / DSM 13023 / NCIMB 13966).